We begin with the raw amino-acid sequence, 358 residues long: MSYTAPTDPVNKQEVVKLSQLCELCHGRKAVLRRPKNLQKICKECFYYVFETEIHNTIVSNNLFQRGEKVAIGASGGKDSTVLAHILKLLNDRHDYGVKLVLLSIDEGIVGYRDDSLATVKRNQKQYQLPLEIVSFRDLYDWTMDEIVAIAGIRNSCTYCGVFRRQALDRGAAKLDINHVVTGHNADDMAETVLMNILRGDVARLERSTAIITQSAGSPIRRSKPFKYCYQKEIVLYAHYKKLDYFSTECTYAPEAFRGTARELMKNLEAVRPSCIIDIIQSGENLVLKKKKRHPNSKVEFKDGNRCERCGYLSSNKICKACMLLQGLEKNRASMSIDNDTNVDGAARVMRTLEKLSF.

It belongs to the TtcA family. CTU1/NCS6/ATPBD3 subfamily.

The protein localises to the cytoplasm. The protein operates within tRNA modification; 5-methoxycarbonylmethyl-2-thiouridine-tRNA biosynthesis. Functionally, plays a central role in 2-thiolation of mcm(5)S(2)U at tRNA wobble positions of tRNA(Lys), tRNA(Glu) and tRNA(Gln). Directly binds tRNAs and probably acts by catalyzing adenylation of tRNAs, an intermediate required for 2-thiolation. It is unclear whether it acts as a sulfurtransferase that transfers sulfur from thiocarboxylated URM1 onto the uridine of tRNAs at wobble position. Prior mcm(5) tRNA modification by the elongator complex is required for 2-thiolation. May also be involved in protein urmylation. This chain is Cytoplasmic tRNA 2-thiolation protein 1, found in Candida glabrata (strain ATCC 2001 / BCRC 20586 / JCM 3761 / NBRC 0622 / NRRL Y-65 / CBS 138) (Yeast).